A 116-amino-acid chain; its full sequence is Bacterial microcompartment shell protein CutR (116 aa).

In terms of domain architecture, BMC circularly permuted spans 10–108 (RIIQESVPGK…LEYFKNSLGF (99 aa)).

This sequence belongs to the EutS/PduU family. Has been crystallized in 5 structures (all are mutated, 3 have an N-terminal His-tag), most are homohexameric with a central pore. In two the homohexamer lies flat with a beta-barrel on the flat face created by the protruding N termini of the six chains. In 2 others the hexamer is not flat but has a six-fold screw axis; the screw pitch is 33.8 or 41.9 Angstroms depending on the structure. Interacts with the BMC major shell protein.

It localises to the bacterial microcompartment. Its pathway is amine and polyamine metabolism; choline degradation. Functionally, a minor shell protein of the choline degradation-specific bacterial microcompartment (BMC). Proteins such as this one with circularly permuted BMC domains may play a key role in conferring heterogeneity and flexibility in this BMC. This chain is Bacterial microcompartment shell protein CutR, found in Streptococcus intermedius (strain ATCC 27335 / DSM 20573 / CCUG 32759 / CIP 103248 / JCM 12996 / LMG 17840 / NCTC 11324 / SK54 / 1877).